The chain runs to 488 residues: Ribulose bisphosphate carboxylase large chain (488 aa).

Residues N127 and T177 each coordinate substrate. The active-site Proton acceptor is the K179. Residue K181 coordinates substrate. Residues K205, D207, and E208 each coordinate Mg(2+). The residue at position 205 (K205) is an N6-carboxylysine. H297 acts as the Proton acceptor in catalysis. Substrate-binding residues include R298, H330, and S382.

This sequence belongs to the RuBisCO large chain family. Type I subfamily. Heterohexadecamer of 8 large chains and 8 small chains. The cofactor is Mg(2+).

It is found in the plastid. Its subcellular location is the chloroplast. The enzyme catalyses 2 (2R)-3-phosphoglycerate + 2 H(+) = D-ribulose 1,5-bisphosphate + CO2 + H2O. It carries out the reaction D-ribulose 1,5-bisphosphate + O2 = 2-phosphoglycolate + (2R)-3-phosphoglycerate + 2 H(+). Its function is as follows. RuBisCO catalyzes two reactions: the carboxylation of D-ribulose 1,5-bisphosphate, the primary event in carbon dioxide fixation, as well as the oxidative fragmentation of the pentose substrate in the photorespiration process. Both reactions occur simultaneously and in competition at the same active site. The sequence is that of Ribulose bisphosphate carboxylase large chain from Ectocarpus siliculosus (Brown alga).